The primary structure comprises 384 residues: 3,7-dimethylxanthine N-methyltransferase 1 (384 aa).

Positions 18, 61, 66, 100, 101, 139, 140, and 156 each coordinate S-adenosyl-L-homocysteine. A theobromine-binding site is contributed by Tyr-157. Cys-158 contributes to the S-adenosyl-L-homocysteine binding site. Residues His-160 and Trp-161 each coordinate theobromine. Asn-178 is a binding site for Mg(2+). Ser-237 lines the theobromine pocket. Residues Asp-260, Phe-262, and Asn-263 each contribute to the Mg(2+) site. Tyr-368 is a binding site for theobromine.

The protein belongs to the methyltransferase superfamily. Type-7 methyltransferase family. Mg(2+) serves as cofactor. As to expression, highly expressed in developing endosperm and immature fruits (grains). Detected in young leaves and flower buds, but not in mature fruits.

The enzyme catalyses theobromine + S-adenosyl-L-methionine = caffeine + S-adenosyl-L-homocysteine + H(+). The catalysed reaction is 1,7-dimethylxanthine + S-adenosyl-L-methionine = caffeine + S-adenosyl-L-homocysteine + H(+). It carries out the reaction 7-methylxanthine + S-adenosyl-L-methionine = theobromine + S-adenosyl-L-homocysteine + H(+). It functions in the pathway alkaloid biosynthesis. In terms of biological role, involved in the biosynthesis of caffeine. Catalyzes the conversion of 7-methylxanthine to caffeine, likely via theobromine as an intermediate. This chain is 3,7-dimethylxanthine N-methyltransferase 1, found in Coffea arabica (Arabian coffee).